We begin with the raw amino-acid sequence, 133 residues long: Large ribosomal subunit protein bL20 (133 aa).

Belongs to the bacterial ribosomal protein bL20 family.

Its function is as follows. Binds directly to 23S ribosomal RNA and is necessary for the in vitro assembly process of the 50S ribosomal subunit. It is not involved in the protein synthesizing functions of that subunit. The sequence is that of Large ribosomal subunit protein bL20 from Chelativorans sp. (strain BNC1).